The sequence spans 122 residues: MIQVESNLDVADNSGAKRVCCIKVLGGSRRRYATVGDIIVVSVKDALPNSKVKKGAVMKAVVVRTKKEVGRADGSYIKFDSNSAVLLSNQGEPVGTRIFGPVARELRQKNFMKIVSLAPEVL.

Belongs to the universal ribosomal protein uL14 family. Part of the 50S ribosomal subunit. Forms a cluster with proteins L3 and L19. In the 70S ribosome, L14 and L19 interact and together make contacts with the 16S rRNA in bridges B5 and B8.

Its function is as follows. Binds to 23S rRNA. Forms part of two intersubunit bridges in the 70S ribosome. The sequence is that of Large ribosomal subunit protein uL14 from Solidesulfovibrio magneticus (strain ATCC 700980 / DSM 13731 / RS-1) (Desulfovibrio magneticus).